Here is a 323-residue protein sequence, read N- to C-terminus: o-succinylbenzoate synthase (323 aa).

The Proton donor role is filled by lysine 134. 3 residues coordinate Mg(2+): aspartate 162, glutamate 191, and aspartate 214. Lysine 236 acts as the Proton acceptor in catalysis.

This sequence belongs to the mandelate racemase/muconate lactonizing enzyme family. MenC type 1 subfamily. A divalent metal cation serves as cofactor.

The catalysed reaction is (1R,6R)-6-hydroxy-2-succinyl-cyclohexa-2,4-diene-1-carboxylate = 2-succinylbenzoate + H2O. It functions in the pathway quinol/quinone metabolism; 1,4-dihydroxy-2-naphthoate biosynthesis; 1,4-dihydroxy-2-naphthoate from chorismate: step 4/7. The protein operates within quinol/quinone metabolism; menaquinone biosynthesis. Functionally, converts 2-succinyl-6-hydroxy-2,4-cyclohexadiene-1-carboxylate (SHCHC) to 2-succinylbenzoate (OSB). In Pectobacterium atrosepticum (strain SCRI 1043 / ATCC BAA-672) (Erwinia carotovora subsp. atroseptica), this protein is o-succinylbenzoate synthase.